Reading from the N-terminus, the 997-residue chain is Disease resistance protein RML1A (997 aa).

The TIR domain occupies 12-176 (WRYRVFTSFH…KIARDVSEKL (165 aa)). Glutamate 87 is a catalytic residue. One can recognise an NB-ARC domain in the interval 191–447 (EAHLRKIQSL…HIAIFFNYED (257 aa)). LRR repeat units follow at residues 194–218 (LRKI…GPAG), 534–557 (TSGI…RFLS), 600–623 (AENL…TQLL), 624–647 (TKLK…SNAT), 649–670 (LEML…IKNL), 671–693 (HKLD…NINL), 694–714 (ASLE…PAFS), 715–737 (TKIK…ITHC), 758–781 (PSSL…CIKD), and 783–808 (QRLD…SLRL).

It carries out the reaction NAD(+) + H2O = ADP-D-ribose + nicotinamide + H(+). Its function is as follows. TIR-NB-LRR receptor-like protein that confers resistance to the pathogen Leptosphaeria maculans (blackleg disease). The sequence is that of Disease resistance protein RML1A from Arabidopsis thaliana (Mouse-ear cress).